The following is a 331-amino-acid chain: 6-phosphogluconolactonase (331 aa).

The protein belongs to the cycloisomerase 2 family.

The enzyme catalyses 6-phospho-D-glucono-1,5-lactone + H2O = 6-phospho-D-gluconate + H(+). Its pathway is carbohydrate degradation; pentose phosphate pathway; D-ribulose 5-phosphate from D-glucose 6-phosphate (oxidative stage): step 2/3. Functionally, catalyzes the hydrolysis of 6-phosphogluconolactone to 6-phosphogluconate. The polypeptide is 6-phosphogluconolactonase (Salmonella paratyphi A (strain ATCC 9150 / SARB42)).